A 201-amino-acid polypeptide reads, in one-letter code: Small ribosomal subunit protein uS4 (201 aa).

Residues 20-46 (SGTGKELSRRPYAPGQHGQDRRGSLSE) are disordered. Positions 93–156 (RRLDNVVYRL…KDLQIVKEAL (64 aa)) constitute an S4 RNA-binding domain.

Belongs to the universal ribosomal protein uS4 family. In terms of assembly, part of the 30S ribosomal subunit. Contacts protein S5. The interaction surface between S4 and S5 is involved in control of translational fidelity.

One of the primary rRNA binding proteins, it binds directly to 16S rRNA where it nucleates assembly of the body of the 30S subunit. Its function is as follows. With S5 and S12 plays an important role in translational accuracy. The polypeptide is Small ribosomal subunit protein uS4 (Ligilactobacillus salivarius (strain UCC118) (Lactobacillus salivarius)).